The sequence spans 241 residues: ATP synthase subunit a (241 aa).

A run of 7 helical transmembrane segments spans residues 29 to 49 (NSSL…LLGV), 86 to 106 (IPLV…GMLP), 114 to 134 (HVIV…IVGF), 144 to 164 (ILLP…IKLF), 177 to 197 (LAAN…FIMN), 200 to 220 (LILT…EVFV), and 221 to 241 (AILQ…DAVK).

This sequence belongs to the ATPase A chain family. In terms of assembly, F-type ATPases have 2 components, CF(1) - the catalytic core - and CF(0) - the membrane proton channel. CF(1) has five subunits: alpha(3), beta(3), gamma(1), delta(1), epsilon(1). CF(0) has three main subunits: a(1), b(2) and c(9-12). The alpha and beta chains form an alternating ring which encloses part of the gamma chain. CF(1) is attached to CF(0) by a central stalk formed by the gamma and epsilon chains, while a peripheral stalk is formed by the delta and b chains.

The protein localises to the cell membrane. Its function is as follows. Key component of the proton channel; it plays a direct role in the translocation of protons across the membrane. In Wolbachia sp. subsp. Brugia malayi (strain TRS), this protein is ATP synthase subunit a.